Reading from the N-terminus, the 65-residue chain is Large ribosomal subunit protein uL29 (65 aa).

Belongs to the universal ribosomal protein uL29 family.

This Xylella fastidiosa (strain Temecula1 / ATCC 700964) protein is Large ribosomal subunit protein uL29.